The sequence spans 153 residues: Calmodulin-like protein 4 (153 aa).

4 consecutive EF-hand domains span residues 8 to 43 (DQIN…LGAS), 44 to 79 (PTPG…QIKQ), 81 to 116 (DPKK…LGEK), and 117 to 152 (LTHK…PVRD).

It belongs to the calmodulin family. As to quaternary structure, interacts with MYO7B; the interaction mediates the association of CALML4 with the IMAC/intermicrovillar adhesion complex. Interacts with MYO7A.

It is found in the cell projection. It localises to the microvillus. As part of the intermicrovillar adhesion complex/IMAC plays a role in epithelial brush border differentiation, controlling microvilli organization and length. Acts as a light chain for MYO7B and is required for efficient targeting of the IMAC to the tips of border brush microvilli. The polypeptide is Calmodulin-like protein 4 (CALML4) (Bos taurus (Bovine)).